A 245-amino-acid chain; its full sequence is Isopentenyl phosphate kinase (245 aa).

Lys5–Ser9 contacts ATP. Position 45 (Gly45) interacts with substrate. ATP is bound at residue Gly46. His50 and Gly143 together coordinate substrate. ATP contacts are provided by residues Asp164, Tyr169–Lys174, Gly201, and Lys205.

Belongs to the isopentenyl phosphate kinase family. Homodimer.

It catalyses the reaction isopentenyl phosphate + ATP = isopentenyl diphosphate + ADP. Functionally, catalyzes the formation of isopentenyl diphosphate (IPP), the building block of all isoprenoids. Has lower activity with isopentenyl thiolophosphate (ISP). Has low activity with dimethylallyl phosphate (DMAP), 1-butyl phosphate (BP) and 3-buten-1-yl phosphate (BEP). Has no significant activity with geranyl phosphate (in vitro). This chain is Isopentenyl phosphate kinase, found in Thermoplasma acidophilum (strain ATCC 25905 / DSM 1728 / JCM 9062 / NBRC 15155 / AMRC-C165).